We begin with the raw amino-acid sequence, 595 residues long: Tripeptidyl-peptidase SED3 (595 aa).

An N-terminal signal peptide occupies residues 1–22 (MLLPWQQTIIILFLGVNSLVAA). Residues 23–201 (LRNTYRTVEE…KLETIQLSSN (179 aa)) constitute a propeptide, removed in mature form. 3 N-linked (GlcNAc...) asparagine glycosylation sites follow: N207, N264, and N278. The 387-residue stretch at 209-595 (TITPQCLRDI…EILAKIVRDL (387 aa)) folds into the Peptidase S53 domain. Residues E285 and D289 each act as charge relay system in the active site. Residues N298 and N365 are each glycosylated (N-linked (GlcNAc...) asparagine). The active-site Charge relay system is S499. Positions 541 and 542 each coordinate Ca(2+). Residues N554, N557, and N569 are each glycosylated (N-linked (GlcNAc...) asparagine). Ca(2+) contacts are provided by G573 and D575.

Ca(2+) serves as cofactor.

The protein resides in the secreted. Its subcellular location is the extracellular space. It catalyses the reaction Release of an N-terminal tripeptide from a polypeptide.. Its function is as follows. Secreted tripeptidyl-peptidase which degrades proteins at acidic pHs and is involved in virulence. In Arthroderma otae (strain ATCC MYA-4605 / CBS 113480) (Microsporum canis), this protein is Tripeptidyl-peptidase SED3 (SED3).